Reading from the N-terminus, the 463-residue chain is Eukaryotic translation initiation factor 3 subunit E (463 aa).

One can recognise a PCI domain in the interval 224-407; it reads FNLGENQGCQ…NMLHITRPHA (184 aa). Residues 432–463 form a disordered region; that stretch reads QSSVGEPRERGERGERGNKGGRGRPRTQEVAA. A compositionally biased stretch (basic and acidic residues) spans 437 to 449; the sequence is EPRERGERGERGN.

It belongs to the eIF-3 subunit E family. As to quaternary structure, component of the eukaryotic translation initiation factor 3 (eIF-3) complex.

It is found in the cytoplasm. Component of the eukaryotic translation initiation factor 3 (eIF-3) complex, which is involved in protein synthesis of a specialized repertoire of mRNAs and, together with other initiation factors, stimulates binding of mRNA and methionyl-tRNAi to the 40S ribosome. The eIF-3 complex specifically targets and initiates translation of a subset of mRNAs involved in cell proliferation. This chain is Eukaryotic translation initiation factor 3 subunit E, found in Cryptococcus neoformans var. neoformans serotype D (strain JEC21 / ATCC MYA-565) (Filobasidiella neoformans).